A 346-amino-acid polypeptide reads, in one-letter code: N-acetyl-gamma-glutamyl-phosphate reductase (346 aa).

Cys150 is a catalytic residue.

It belongs to the NAGSA dehydrogenase family. Type 1 subfamily.

It is found in the cytoplasm. The enzyme catalyses N-acetyl-L-glutamate 5-semialdehyde + phosphate + NADP(+) = N-acetyl-L-glutamyl 5-phosphate + NADPH + H(+). The protein operates within amino-acid biosynthesis; L-arginine biosynthesis; N(2)-acetyl-L-ornithine from L-glutamate: step 3/4. Functionally, catalyzes the NADPH-dependent reduction of N-acetyl-5-glutamyl phosphate to yield N-acetyl-L-glutamate 5-semialdehyde. This chain is N-acetyl-gamma-glutamyl-phosphate reductase, found in Lachnoclostridium phytofermentans (strain ATCC 700394 / DSM 18823 / ISDg) (Clostridium phytofermentans).